The sequence spans 584 residues: Proline--tRNA ligase (584 aa).

The disordered stretch occupies residues 242 to 261 (APPASNPEERPATQVHDTPD).

This sequence belongs to the class-II aminoacyl-tRNA synthetase family. ProS type 1 subfamily. In terms of assembly, homodimer.

The protein localises to the cytoplasm. It catalyses the reaction tRNA(Pro) + L-proline + ATP = L-prolyl-tRNA(Pro) + AMP + diphosphate. Functionally, catalyzes the attachment of proline to tRNA(Pro) in a two-step reaction: proline is first activated by ATP to form Pro-AMP and then transferred to the acceptor end of tRNA(Pro). As ProRS can inadvertently accommodate and process non-cognate amino acids such as alanine and cysteine, to avoid such errors it has two additional distinct editing activities against alanine. One activity is designated as 'pretransfer' editing and involves the tRNA(Pro)-independent hydrolysis of activated Ala-AMP. The other activity is designated 'posttransfer' editing and involves deacylation of mischarged Ala-tRNA(Pro). The misacylated Cys-tRNA(Pro) is not edited by ProRS. This Salinispora arenicola (strain CNS-205) protein is Proline--tRNA ligase.